We begin with the raw amino-acid sequence, 72 residues long: UPF0270 protein YheU (72 aa).

Belongs to the UPF0270 family.

The sequence is that of UPF0270 protein YheU from Escherichia coli (strain ATCC 8739 / DSM 1576 / NBRC 3972 / NCIMB 8545 / WDCM 00012 / Crooks).